The sequence spans 368 residues: C6 finger domain transcription factor tcpZ (368 aa).

Positions 30–56 form a DNA-binding region, zn(2)-C6 fungal-type; it reads CDACHASKVRCSGEPICARCQRDNVAC. A disordered region spans residues 84–109; the sequence is FIEQRQRPAASQPPGHGTSRDSSVCA.

The protein resides in the nucleus. Functionally, transcription factor that specifically regulates the thioclapurine biosynthesis gene cluster. This chain is C6 finger domain transcription factor tcpZ, found in Claviceps purpurea (strain 20.1) (Ergot fungus).